The primary structure comprises 194 residues: Potassium-transporting ATPase KdpC subunit (194 aa).

A helical membrane pass occupies residues 12 to 34; the sequence is LFLLLLTGGVYPLLTTALGQWWF.

This sequence belongs to the KdpC family. In terms of assembly, the system is composed of three essential subunits: KdpA, KdpB and KdpC.

It is found in the cell inner membrane. In terms of biological role, part of the high-affinity ATP-driven potassium transport (or Kdp) system, which catalyzes the hydrolysis of ATP coupled with the electrogenic transport of potassium into the cytoplasm. This subunit acts as a catalytic chaperone that increases the ATP-binding affinity of the ATP-hydrolyzing subunit KdpB by the formation of a transient KdpB/KdpC/ATP ternary complex. This chain is Potassium-transporting ATPase KdpC subunit, found in Salmonella schwarzengrund (strain CVM19633).